The chain runs to 251 residues: ATP synthase subunit a (251 aa).

Transmembrane regions (helical) follow at residues 14 to 34, 78 to 98, 107 to 127, 174 to 194, and 196 to 216; these read GFVK…LLAV, YLPF…FAVF, SLST…FYGI, MILA…MGVL, and LLIG…YIAA. Residues 224–251 are disordered; that stretch reads NAGASDDEGGEDAKSACAAGGKICKHKP.

It belongs to the ATPase A chain family. In terms of assembly, F-type ATPases have 2 components, CF(1) - the catalytic core - and CF(0) - the membrane proton channel. CF(1) has five subunits: alpha(3), beta(3), gamma(1), delta(1), epsilon(1). CF(0) has three main subunits: a(1), b(2) and c(9-12). The alpha and beta chains form an alternating ring which encloses part of the gamma chain. CF(1) is attached to CF(0) by a central stalk formed by the gamma and epsilon chains, while a peripheral stalk is formed by the delta and b chains.

It localises to the cell inner membrane. Key component of the proton channel; it plays a direct role in the translocation of protons across the membrane. The chain is ATP synthase subunit a from Nitrosospira multiformis (strain ATCC 25196 / NCIMB 11849 / C 71).